The chain runs to 140 residues: MSITTHLDIVSAEHEIFSGVVEMVVATGELGEIGITPGHAPLLTVLRPGEVRITLQGGTQDIYYVQGGMLEVQPHCVTILADVAERAEHLDEAAALAAKAKAEAAIASKGGDIDYSVAAAELARAVAQIRAIQKTRKKMK.

The protein belongs to the ATPase epsilon chain family. F-type ATPases have 2 components, CF(1) - the catalytic core - and CF(0) - the membrane proton channel. CF(1) has five subunits: alpha(3), beta(3), gamma(1), delta(1), epsilon(1). CF(0) has three main subunits: a, b and c.

Its subcellular location is the cell inner membrane. In terms of biological role, produces ATP from ADP in the presence of a proton gradient across the membrane. In Legionella pneumophila (strain Paris), this protein is ATP synthase epsilon chain.